A 248-amino-acid polypeptide reads, in one-letter code: 3-deoxy-manno-octulosonate cytidylyltransferase (248 aa).

This sequence belongs to the KdsB family.

Its subcellular location is the cytoplasm. It carries out the reaction 3-deoxy-alpha-D-manno-oct-2-ulosonate + CTP = CMP-3-deoxy-beta-D-manno-octulosonate + diphosphate. It functions in the pathway nucleotide-sugar biosynthesis; CMP-3-deoxy-D-manno-octulosonate biosynthesis; CMP-3-deoxy-D-manno-octulosonate from 3-deoxy-D-manno-octulosonate and CTP: step 1/1. Its pathway is bacterial outer membrane biogenesis; lipopolysaccharide biosynthesis. Activates KDO (a required 8-carbon sugar) for incorporation into bacterial lipopolysaccharide in Gram-negative bacteria. In Chlorobium chlorochromatii (strain CaD3), this protein is 3-deoxy-manno-octulosonate cytidylyltransferase.